Consider the following 431-residue polypeptide: Glucose-1-phosphate adenylyltransferase (431 aa).

Lysine 39 is a beta-D-fructose 1,6-bisphosphate binding site. AMP is bound by residues arginine 40, histidine 46, and arginine 52. Tyrosine 114 serves as a coordination point for alpha-D-glucose 1-phosphate. Arginine 130 lines the AMP pocket. Alpha-D-glucose 1-phosphate is bound by residues glycine 179, 194–195 (EK), and serine 212. AMP is bound by residues glutamate 370 and arginine 386. Beta-D-fructose 1,6-bisphosphate contacts are provided by residues 419–423 (REMLR) and 429–431 (QER).

This sequence belongs to the bacterial/plant glucose-1-phosphate adenylyltransferase family. In terms of assembly, homotetramer.

It catalyses the reaction alpha-D-glucose 1-phosphate + ATP + H(+) = ADP-alpha-D-glucose + diphosphate. The protein operates within glycan biosynthesis; glycogen biosynthesis. Allosterically activated by fructose-1,6-bisphosphate (F16BP) and inhibited by AMP. Involved in the biosynthesis of ADP-glucose, a building block required for the elongation reactions to produce glycogen. Catalyzes the reaction between ATP and alpha-D-glucose 1-phosphate (G1P) to produce pyrophosphate and ADP-Glc. This chain is Glucose-1-phosphate adenylyltransferase, found in Salmonella paratyphi A (strain ATCC 9150 / SARB42).